The chain runs to 166 residues: NAD(P)H-quinone oxidoreductase subunit I, chloroplastic (166 aa).

4Fe-4S ferredoxin-type domains lie at 55–84 and 95–124; these read GRIHFEFDKCIACEVCVRVCPIDLPVVDWK and LNYSIDFGICIFCGHCVEYCPTNCLSMTEE. [4Fe-4S] cluster contacts are provided by cysteine 64, cysteine 67, cysteine 70, cysteine 74, cysteine 104, cysteine 107, cysteine 110, and cysteine 114.

The protein belongs to the complex I 23 kDa subunit family. As to quaternary structure, NDH is composed of at least 16 different subunits, 5 of which are encoded in the nucleus. Requires [4Fe-4S] cluster as cofactor.

It localises to the plastid. The protein localises to the chloroplast thylakoid membrane. It carries out the reaction a plastoquinone + NADH + (n+1) H(+)(in) = a plastoquinol + NAD(+) + n H(+)(out). The catalysed reaction is a plastoquinone + NADPH + (n+1) H(+)(in) = a plastoquinol + NADP(+) + n H(+)(out). Functionally, NDH shuttles electrons from NAD(P)H:plastoquinone, via FMN and iron-sulfur (Fe-S) centers, to quinones in the photosynthetic chain and possibly in a chloroplast respiratory chain. The immediate electron acceptor for the enzyme in this species is believed to be plastoquinone. Couples the redox reaction to proton translocation, and thus conserves the redox energy in a proton gradient. In Perymeniopsis ovalifolia, this protein is NAD(P)H-quinone oxidoreductase subunit I, chloroplastic.